Reading from the N-terminus, the 260-residue chain is Small ribosomal subunit protein uS2 (260 aa).

Belongs to the universal ribosomal protein uS2 family.

The sequence is that of Small ribosomal subunit protein uS2 from Roseobacter denitrificans (strain ATCC 33942 / OCh 114) (Erythrobacter sp. (strain OCh 114)).